The chain runs to 21 residues: 23S rRNA methylase leader peptide (21 aa).

Its function is as follows. Involved in erythromycin resistance. In Corynebacterium diphtheriae, this protein is 23S rRNA methylase leader peptide.